The following is a 20-amino-acid chain: Cytochrome P450IIB (20 aa).

The protein belongs to the cytochrome P450 family. It depends on heme as a cofactor.

The protein localises to the endoplasmic reticulum membrane. It localises to the microsome membrane. It catalyses the reaction an organic molecule + reduced [NADPH--hemoprotein reductase] + O2 = an alcohol + oxidized [NADPH--hemoprotein reductase] + H2O + H(+). Its function is as follows. Cytochromes P450 are a group of heme-thiolate monooxygenases. In liver microsomes, this enzyme is involved in an NADPH-dependent electron transport pathway. This isozyme is active upon P.nitroanisole, aniline, D-benzphetamine, delta(9)-tetrahydrocannabinol (THC) and strychnine. The chain is Cytochrome P450IIB from Cavia porcellus (Guinea pig).